Consider the following 444-residue polypeptide: Tubulin beta chain (444 aa).

8 residues coordinate GTP: Q11, E69, S138, G142, T143, G144, N204, and N226. E69 is a Mg(2+) binding site.

This sequence belongs to the tubulin family. In terms of assembly, dimer of alpha and beta chains. A typical microtubule is a hollow water-filled tube with an outer diameter of 25 nm and an inner diameter of 15 nM. Alpha-beta heterodimers associate head-to-tail to form protofilaments running lengthwise along the microtubule wall with the beta-tubulin subunit facing the microtubule plus end conferring a structural polarity. Microtubules usually have 13 protofilaments but different protofilament numbers can be found in some organisms and specialized cells. Mg(2+) serves as cofactor.

It is found in the cytoplasm. It localises to the cytoskeleton. Functionally, tubulin is the major constituent of microtubules, a cylinder consisting of laterally associated linear protofilaments composed of alpha- and beta-tubulin heterodimers. Microtubules grow by the addition of GTP-tubulin dimers to the microtubule end, where a stabilizing cap forms. Below the cap, tubulin dimers are in GDP-bound state, owing to GTPase activity of alpha-tubulin. The protein is Tubulin beta chain of Trichuris trichiura (Whipworm).